The primary structure comprises 1343 residues: DNA-directed RNA polymerase subunit beta (1343 aa).

The protein belongs to the RNA polymerase beta chain family. The RNAP catalytic core consists of 2 alpha, 1 beta, 1 beta' and 1 omega subunit. When a sigma factor is associated with the core the holoenzyme is formed, which can initiate transcription.

It carries out the reaction RNA(n) + a ribonucleoside 5'-triphosphate = RNA(n+1) + diphosphate. DNA-dependent RNA polymerase catalyzes the transcription of DNA into RNA using the four ribonucleoside triphosphates as substrates. The protein is DNA-directed RNA polymerase subunit beta of Haemophilus influenzae (strain PittGG).